A 302-amino-acid polypeptide reads, in one-letter code: 4-hydroxy-tetrahydrodipicolinate synthase (302 aa).

Residue Thr57 participates in pyruvate binding. Residue Tyr145 is the Proton donor/acceptor of the active site. Catalysis depends on Lys173, which acts as the Schiff-base intermediate with substrate. Residue Ile213 coordinates pyruvate.

This sequence belongs to the DapA family. Homotetramer; dimer of dimers.

Its subcellular location is the cytoplasm. The catalysed reaction is L-aspartate 4-semialdehyde + pyruvate = (2S,4S)-4-hydroxy-2,3,4,5-tetrahydrodipicolinate + H2O + H(+). The protein operates within amino-acid biosynthesis; L-lysine biosynthesis via DAP pathway; (S)-tetrahydrodipicolinate from L-aspartate: step 3/4. In terms of biological role, catalyzes the condensation of (S)-aspartate-beta-semialdehyde [(S)-ASA] and pyruvate to 4-hydroxy-tetrahydrodipicolinate (HTPA). In Corynebacterium aurimucosum (strain ATCC 700975 / DSM 44827 / CIP 107346 / CN-1) (Corynebacterium nigricans), this protein is 4-hydroxy-tetrahydrodipicolinate synthase.